The sequence spans 402 residues: Endoplasmic reticulum junction formation protein lunapark-B (402 aa).

Over 1-45 (MGAIISRWKTKPSTVELLESLDKDIKDLEEFRAKNQRLLKLWVGR) the chain is Cytoplasmic. The chain crosses the membrane as a helical span at residues 46 to 66 (LLFYSSALYLLTCLCVYYLYF). Residues 67–77 (PQQWGARLITA) lie on the Lumenal side of the membrane. Residues 78–98 (LPLLAFPALVLLLRKMLIFLF) form a helical membrane-spanning segment. Residues 99-402 (SKRTERNNDK…EEQKKEDESN (304 aa)) lie on the Cytoplasmic side of the membrane. Residues 100–128 (KRTERNNDKLEDLKTQKRKILEEVMETET) adopt a coiled-coil conformation. Residues 142–240 (ESKKKAEAEA…PGPGSGMRPP (99 aa)) form a disordered region. Positions 205–222 (SASTPAGASQAETPQQMM) are enriched in polar residues. Residues 276-301 (CQQCFSHNGMALKEEFEFVAFRCAYC) form a C4-type; plays a role in ER morphology zinc finger. The interval 311–402 (RPQAPRLPEF…EEQKKEDESN (92 aa)) is disordered. A compositionally biased stretch (basic and acidic residues) spans 321–330 (SFERRLRSES). Residues 341–352 (TPEDSDAPEDDM) are compositionally biased toward acidic residues. Residues 385 to 402 (PHAEAEALEEQKKEDESN) show a composition bias toward basic and acidic residues.

It belongs to the lunapark family. In terms of assembly, homodimer; homodimerization requires the C4-type zinc finger motif and decreases during mitosis in a phosphorylation-dependent manner. Post-translationally, phosphorylated. Phosphorylation occurs during interphase. Phosphorylation also occurs during mitosis; these phosphorylations reduce both its homodimerization and the ER three-way tubular junction formation.

Its subcellular location is the endoplasmic reticulum membrane. Its function is as follows. Endoplasmic reticulum (ER)-shaping membrane protein that plays a role in determining ER morphology. Involved in the stabilization of nascent three-way ER tubular junctions within the ER network. May also play a role as a curvature-stabilizing protein within three-way ER tubular junction network. This is Endoplasmic reticulum junction formation protein lunapark-B (lnpkb) from Danio rerio (Zebrafish).